We begin with the raw amino-acid sequence, 98 residues long: Aspartyl/glutamyl-tRNA(Asn/Gln) amidotransferase subunit C (98 aa).

The protein belongs to the GatC family. As to quaternary structure, heterotrimer of A, B and C subunits.

It carries out the reaction L-glutamyl-tRNA(Gln) + L-glutamine + ATP + H2O = L-glutaminyl-tRNA(Gln) + L-glutamate + ADP + phosphate + H(+). The enzyme catalyses L-aspartyl-tRNA(Asn) + L-glutamine + ATP + H2O = L-asparaginyl-tRNA(Asn) + L-glutamate + ADP + phosphate + 2 H(+). In terms of biological role, allows the formation of correctly charged Asn-tRNA(Asn) or Gln-tRNA(Gln) through the transamidation of misacylated Asp-tRNA(Asn) or Glu-tRNA(Gln) in organisms which lack either or both of asparaginyl-tRNA or glutaminyl-tRNA synthetases. The reaction takes place in the presence of glutamine and ATP through an activated phospho-Asp-tRNA(Asn) or phospho-Glu-tRNA(Gln). This chain is Aspartyl/glutamyl-tRNA(Asn/Gln) amidotransferase subunit C, found in Acidothermus cellulolyticus (strain ATCC 43068 / DSM 8971 / 11B).